Consider the following 513-residue polypeptide: MPVEAPRPARHLEVERKFDVIESTVSPSFEGIAAVVRVEQSPTQQLDAVYFDTPSHDLARNQITLRRRTGGADAGWHLKLPAGPDKRTEMRAPLSASGDAVPAELLDVVLAIVRDQPVQPVARISTHRESQILYGAGGDALAEFCNDDVTAWSAGAFHAAGAADNGPAEQQWREWELELVTTDGTADTKLLDRLANRLLDAGAAPAGHGSKLARVLGATSPGELPNGPQPPADPVHRAVSEQVEQLLLWDRAVRADAYDAVHQMRVTTRKIRSLLTDSQESFGLKESAWVIDELRELANVLGVARDAEVLGDRYQRELDALAPELVRGRVRERLVDGARRRYQTGLRRSLIALRSQRYFRLLDALDALVSERAHATSGEESAPVTIDAAYRRVRKAAKAAKTAGDQAGDHHRDEALHLIRKRAKRLRYTAAATGADNVSQEAKVIQTLLGDHQDSVVSREHLIQQAIAANTAGEDTFTYGLLYQQEADLAERCREQLEAALRKLDKAVRKARD.

The CYTH domain maps to 11-219 (HLEVERKFDV…SKLARVLGAT (209 aa)). The region spanning 228–506 (PQPPADPVHR…LEAALRKLDK (279 aa)) is the CHAD domain.

This is an uncharacterized protein from Mycobacterium tuberculosis (strain CDC 1551 / Oshkosh).